The primary structure comprises 578 residues: Protein O-linked-mannose beta-1,4-N-acetylglucosaminyltransferase 2 (578 aa).

Residues 1-4 (MNLP) are Cytoplasmic-facing. A helical; Signal-anchor for type II membrane protein transmembrane segment spans residues 5–25 (AVLNGLLVSVVAALLWKYVRL). The Lumenal segment spans residues 26–578 (VEHTSQLEEE…PFADVLICKT (553 aa)). Asn98, Asn275, and Asn541 each carry an N-linked (GlcNAc...) asparagine glycan. The Fibronectin type-III domain maps to 482-578 (RVREPKCQTS…PFADVLICKT (97 aa)).

Belongs to the glycosyltransferase 61 family.

It localises to the endoplasmic reticulum membrane. The catalysed reaction is 3-O-(alpha-D-mannosyl)-L-threonyl-[protein] + UDP-N-acetyl-alpha-D-glucosamine = 3-O-(N-acetyl-beta-D-glucosaminyl-(1-&gt;4)-alpha-D-mannosyl)-L-threonyl-[protein] + UDP + H(+). The protein operates within protein modification; protein glycosylation. O-linked mannose beta-1,4-N-acetylglucosaminyltransferase that transfers UDP-N-acetyl-D-glucosamine to the 4-position of the mannose to generate N-acetyl-D-glucosamine-beta-1,4-O-D-mannosylprotein. Involved in the biosynthesis of the phosphorylated O-mannosyl trisaccharide (N-acetylgalactosamine-beta-3-N-acetylglucosamine-beta-4-(phosphate-6-)mannose), a carbohydrate structure present in alpha-dystroglycan (DAG1), which is required for binding laminin G-like domain-containing extracellular proteins with high affinity. The protein is Protein O-linked-mannose beta-1,4-N-acetylglucosaminyltransferase 2 (pomgnt2) of Danio rerio (Zebrafish).